Here is a 518-residue protein sequence, read N- to C-terminus: Protein nucleotidyltransferase YdiU (518 aa).

The span at 1–10 (MTHLRFDNRL) shows a compositional bias: basic and acidic residues. Residues 1-23 (MTHLRFDNRLRQQLPGDPEEGSR) form a disordered region. Residues Gly-100, Gly-102, Arg-103, Lys-123, Asp-135, Gly-136, Arg-193, and Arg-200 each contribute to the ATP site. Asp-270 functions as the Proton acceptor in the catalytic mechanism. Residues Asn-271 and Asp-280 each coordinate Mg(2+). Asp-280 contributes to the ATP binding site.

It belongs to the SELO family. Requires Mg(2+) as cofactor. It depends on Mn(2+) as a cofactor.

The catalysed reaction is L-seryl-[protein] + ATP = 3-O-(5'-adenylyl)-L-seryl-[protein] + diphosphate. It catalyses the reaction L-threonyl-[protein] + ATP = 3-O-(5'-adenylyl)-L-threonyl-[protein] + diphosphate. The enzyme catalyses L-tyrosyl-[protein] + ATP = O-(5'-adenylyl)-L-tyrosyl-[protein] + diphosphate. It carries out the reaction L-histidyl-[protein] + UTP = N(tele)-(5'-uridylyl)-L-histidyl-[protein] + diphosphate. The catalysed reaction is L-seryl-[protein] + UTP = O-(5'-uridylyl)-L-seryl-[protein] + diphosphate. It catalyses the reaction L-tyrosyl-[protein] + UTP = O-(5'-uridylyl)-L-tyrosyl-[protein] + diphosphate. Its function is as follows. Nucleotidyltransferase involved in the post-translational modification of proteins. It can catalyze the addition of adenosine monophosphate (AMP) or uridine monophosphate (UMP) to a protein, resulting in modifications known as AMPylation and UMPylation. This Xanthomonas axonopodis pv. citri (strain 306) protein is Protein nucleotidyltransferase YdiU.